Consider the following 445-residue polypeptide: GTPase Der (445 aa).

EngA-type G domains follow at residues 3–167 and 180–353; these read PVIA…YADQ and IKIA…AAAM. Residues 9–16, 56–60, 119–122, 186–193, 233–237, and 298–301 contribute to the GTP site; these read GRPNVGKS, DTGGF, NKAE, DTAGL, and NKWD. Residues 354–438 form the KH-like domain; it reads AKLPTPKLTR…PLRIEFRSST (85 aa).

It belongs to the TRAFAC class TrmE-Era-EngA-EngB-Septin-like GTPase superfamily. EngA (Der) GTPase family. In terms of assembly, associates with the 50S ribosomal subunit.

GTPase that plays an essential role in the late steps of ribosome biogenesis. This is GTPase Der from Burkholderia multivorans (strain ATCC 17616 / 249).